A 376-amino-acid polypeptide reads, in one-letter code: Flap endonuclease 1 (376 aa).

Positions 1-105 are N-domain; sequence MGIKGLSKLL…GELHKRKENA (105 aa). Residue D34 participates in Mg(2+) binding. Residues R47 and R71 each coordinate DNA. 5 residues coordinate Mg(2+): D87, E159, E161, D180, and D182. The I-domain stretch occupies residues 123 to 254; the sequence is QAKKLMKRTA…ITAFELIQQY (132 aa). E159 serves as a coordination point for DNA. DNA is bound by residues G232 and D234. D234 contributes to the Mg(2+) binding site. The segment at 336–344 is interaction with PCNA; sequence AQGRLDSFF. The interval 354 to 376 is disordered; that stretch reads SEAASGVKRKKPTTKAKESRKKK. A compositionally biased stretch (basic residues) spans 360–376; that stretch reads VKRKKPTTKAKESRKKK.

Belongs to the XPG/RAD2 endonuclease family. FEN1 subfamily. As to quaternary structure, interacts with PCNA. Three molecules of FEN1 bind to one PCNA trimer with each molecule binding to one PCNA monomer. PCNA stimulates the nuclease activity without altering cleavage specificity. Requires Mg(2+) as cofactor. In terms of processing, phosphorylated. Phosphorylation upon DNA damage induces relocalization to the nuclear plasma.

The protein localises to the nucleus. Its subcellular location is the nucleolus. It is found in the nucleoplasm. It localises to the mitochondrion. Its function is as follows. Structure-specific nuclease with 5'-flap endonuclease and 5'-3' exonuclease activities involved in DNA replication and repair. During DNA replication, cleaves the 5'-overhanging flap structure that is generated by displacement synthesis when DNA polymerase encounters the 5'-end of a downstream Okazaki fragment. It enters the flap from the 5'-end and then tracks to cleave the flap base, leaving a nick for ligation. Also involved in the long patch base excision repair (LP-BER) pathway, by cleaving within the apurinic/apyrimidinic (AP) site-terminated flap. Acts as a genome stabilization factor that prevents flaps from equilibrating into structures that lead to duplications and deletions. Also possesses 5'-3' exonuclease activity on nicked or gapped double-stranded DNA, and exhibits RNase H activity. Also involved in replication and repair of rDNA and in repairing mitochondrial DNA. The protein is Flap endonuclease 1 of Entamoeba histolytica (strain ATCC 30459 / HM-1:IMSS / ABRM).